We begin with the raw amino-acid sequence, 691 residues long: Methionine--tRNA ligase (691 aa).

Residues 15–25 (PYTNGPIHIGH) carry the 'HIGH' region motif. The Zn(2+) site is built by cysteine 147, cysteine 150, cysteine 160, and cysteine 163. The 'KMSKS' region signature appears at 336 to 340 (KLSTS). Threonine 339 serves as a coordination point for ATP. Residues 589-691 (DFTKMDLRVG…DGVKAGTTIN (103 aa)) form the tRNA-binding domain.

The protein belongs to the class-I aminoacyl-tRNA synthetase family. MetG type 1 subfamily. As to quaternary structure, homodimer. It depends on Zn(2+) as a cofactor.

It is found in the cytoplasm. It carries out the reaction tRNA(Met) + L-methionine + ATP = L-methionyl-tRNA(Met) + AMP + diphosphate. Functionally, is required not only for elongation of protein synthesis but also for the initiation of all mRNA translation through initiator tRNA(fMet) aminoacylation. The sequence is that of Methionine--tRNA ligase from Christiangramia forsetii (strain DSM 17595 / CGMCC 1.15422 / KT0803) (Gramella forsetii).